Reading from the N-terminus, the 343-residue chain is Protein RecA (343 aa).

Residue 66-73 coordinates ATP; it reads GPESSGKT.

It belongs to the RecA family.

The protein resides in the cytoplasm. Functionally, can catalyze the hydrolysis of ATP in the presence of single-stranded DNA, the ATP-dependent uptake of single-stranded DNA by duplex DNA, and the ATP-dependent hybridization of homologous single-stranded DNAs. It interacts with LexA causing its activation and leading to its autocatalytic cleavage. The chain is Protein RecA from Rickettsia bellii (strain OSU 85-389).